A 453-amino-acid polypeptide reads, in one-letter code: UDP-glucosyltransferase avaP (453 aa).

This sequence belongs to the UDP-glycosyltransferase family.

The protein operates within secondary metabolite biosynthesis. UDP-glucosyltransferase; part of the cluster that mediates the biosynthesis of a highly modified cyclo-arginine-tryptophan dipeptide (cRW). The first step of the pathway is perfornmed by the arginine-containing cyclodipeptide synthase (RCPDS) avaA that acts as the scaffold-generating enzyme and is responsible for formation of the cyclo-Arg-Trp (cRW) diketopiperazine. AvaB then acts as a multifunctional flavoenzyme that is responsible for generating the cyclo-Arg-formylkynurenine DKP, which can be deformylated by avaC. AvaB then further catalyzes an additional N-oxidation followed by cyclization and dehydration. The next step is an N-acetylation of the guanidine group catalyzed by the arginine N-acetyltransferase avaD. The roles of the additional enzymes identified within the ava cluster still have to be determined. The sequence is that of UDP-glucosyltransferase avaP from Aspergillus versicolor.